We begin with the raw amino-acid sequence, 285 residues long: MDRGSDPKHTAGMDSDSDPGQAEVALAYQRFEPRAYLRNNYAPPRGDLSNPDGVGPWKLRCMAQVFATGEVSGQVLIDIGSGPTIYQLLSACAHFEDITMTDFLEVNRQELGLWLREEPGAFDWSVYSQHVCLIEDKGESWQEKERQLRARVKRVLPIDVHKPQPLGASGLAPLPADALVSAFCLEAVSPDLPSFRQALYHITTLLRPGGNLLFIGALEESWYLAGEARLSVVPVSEEEVREALVCSGYEVRDLRTYIMPAHLRTGVDDVKGIFFAWAQKIEVQV.

S-adenosyl-L-methionine-binding positions include tyrosine 36, tyrosine 41, 80 to 81 (GS), tyrosine 86, aspartate 102, asparagine 107, 159 to 160 (DV), and alanine 182. The octopamine site is built by glutamate 220 and aspartate 268.

It belongs to the class I-like SAM-binding methyltransferase superfamily. NNMT/PNMT/TEMT family. As to expression, expressed in the adrenal medulla and brain.

The enzyme catalyses phenylethanolamine + S-adenosyl-L-methionine = N-methylphenylethanolamine + S-adenosyl-L-homocysteine + H(+). The catalysed reaction is (R)-noradrenaline + S-adenosyl-L-methionine = (R)-adrenaline + S-adenosyl-L-homocysteine + H(+). It carries out the reaction (R)-normetanephrine + S-adenosyl-L-methionine = (R)-metanephrine + S-adenosyl-L-homocysteine + H(+). It catalyses the reaction (R)-octopamine + S-adenosyl-L-methionine = (R)-synephrine + S-adenosyl-L-homocysteine + H(+). Its pathway is catecholamine biosynthesis; (R)-adrenaline biosynthesis; (R)-adrenaline from (R)-noradrenaline: step 1/1. Inhibited by 3-methyl-l,2,3,4-tetrahydro[1]benzothieno[3,2-c]pyridine hydrochloride. Its function is as follows. Catalyzes the transmethylation of nonepinephrine (noradrenaline) to form epinephrine (adrenaline), using S-adenosyl-L-methionine as the methyl donor. Other substrates include phenylethanolamine, octopamine and normetanephrine. The polypeptide is Phenylethanolamine N-methyltransferase (Pnmt) (Rattus norvegicus (Rat)).